A 384-amino-acid chain; its full sequence is Transcription factor TGA3 (384 aa).

Disordered stretches follow at residues Lys-36–Val-70 and Tyr-76–Ile-95. The span at Ile-39 to Thr-55 shows a compositional bias: low complexity. Over residues Val-58–Asn-68 the composition is skewed to basic and acidic residues. Residues Tyr-76–Asn-88 are compositionally biased toward polar residues. The bZIP domain occupies Asn-96–Leu-138. Residues Lys-98–Lys-118 are basic motif. The short motif at Met-99–Asn-106 is the Nuclear localization signal element. Residues Lys-117–Gln-144 adopt a coiled-coil conformation. Residues Leu-124–Leu-138 are leucine-zipper. The DOG1 domain occupies Ile-167–Arg-379. Positions 219, 236, and 249 each coordinate hexadecanoate. Residues Asp-267–Gln-296 adopt a coiled-coil conformation.

The protein belongs to the bZIP family. Binds DNA as a dimer. Interacts with NPR3, NPR4 and sumoylated NPR1. Interacts with GRXC7/ROXY1. Expressed in the whole plant.

The protein localises to the nucleus. Its function is as follows. Transcriptional activator that binds specifically to the DNA sequence 5'-TGACG-3'. Recognizes ocs elements like the as-1 motif of the cauliflower mosaic virus 35S promoter. Binding to the as-1-like cis elements mediate auxin- and salicylic acid-inducible transcription. Required to induce the systemic acquired resistance (SAR) via the regulation of pathogenesis-related genes expression. Binding to the as-1 element of PR-1 promoter is salicylic acid-inducible and mediated by sumoylated NPR1. Could also bind to the Hex-motif (5'-TGACGTGG-3') another cis-acting element found in plant histone promoters. The sequence is that of Transcription factor TGA3 from Arabidopsis thaliana (Mouse-ear cress).